The sequence spans 138 residues: Histone H2A.Z (138 aa).

Residues Met-1–Gly-10 show a composition bias toward gly residues. The tract at residues Met-1–Val-21 is disordered. N6-acetyllysine is present on residues Lys-4 and Lys-9.

It belongs to the histone H2A family. In terms of assembly, the nucleosome is a histone octamer containing two molecules each of H2A, H2B, H3 and H4 assembled in one H3-H4 heterotetramer and two H2A-H2B heterodimers. The octamer wraps approximately 147 bp of DNA. H2A or its variant H2A.Z forms a heterodimer with H2B. H2A.Z associates with the VPS72/SWC2 subunit of the SWR1 chromatin remodeling complex. Also interacts with RBP1/DNA-directed RNA polymerase II largest subunit. Post-translationally, acetylated once deposited into chromatin.

The protein resides in the nucleus. It localises to the chromosome. Functionally, variant histone H2A which can replace H2A in some nucleosomes. Nucleosomes wrap and compact DNA into chromatin, limiting DNA accessibility to the cellular machineries which require DNA as a template. Histones thereby play a central role in transcription regulation, DNA repair, DNA replication and chromosomal stability. DNA accessibility is regulated via a complex set of post-translational modifications of histones, also called histone code, and nucleosome remodeling. This variant is enriched at promoters, it may keep them in a repressed state until the appropriate activation signal is received. Near telomeres, it may counteract gene silencing caused by the spread of heterochromatin proteins. Required for the RNA polymerase II and SPT15/TBP recruitment to the target genes. Involved in chromosome stability. The sequence is that of Histone H2A.Z (HTZ1) from Cryptococcus neoformans var. neoformans serotype D (strain B-3501A) (Filobasidiella neoformans).